Consider the following 354-residue polypeptide: Polyribonucleotide 5'-hydroxyl-kinase PYRAB01840 (354 aa).

Residue 36 to 43 (GDVDTGKT) participates in ATP binding.

Requires a divalent metal cation as cofactor.

The catalysed reaction is a 5'-end dephospho-2'-deoxyribonucleoside-DNA + ATP = a 5'-end 5'-phospho-2'-deoxyribonucleoside-DNA + ADP + H(+). The enzyme catalyses a 5'-end dephospho-ribonucleoside-RNA + ATP = a 5'-end 5'-phospho-ribonucleoside-RNA + ADP + H(+). Functionally, polynucleotide kinase that can phosphorylate the 5'-hydroxyl groups of both single-stranded RNA (ssRNA) and single-stranded DNA (ssDNA). Exhibits a strong preference for ssRNA. This Pyrococcus abyssi (strain GE5 / Orsay) protein is Polyribonucleotide 5'-hydroxyl-kinase PYRAB01840.